A 1250-amino-acid polypeptide reads, in one-letter code: Protein SSD1 (1250 aa).

A compositionally biased stretch (polar residues) spans 1–22 (MSKNSNVNNNRSQEPNNMFVQT). Positions 1-32 (MSKNSNVNNNRSQEPNNMFVQTTGGGKNAPKQ) are disordered. Ser-2 is subject to N-acetylserine. At Ser-40 the chain carries Phosphoserine. Residues 79 to 163 (TGQYLSGNSG…SSIYGHSRRH (85 aa)) form a disordered region. Residues 84-94 (SGNSGSNNHFT) show a composition bias toward polar residues. Low complexity predominate over residues 124–145 (NNSGYYHNSYDNNNNSNNPGSN). Phosphoserine occurs at positions 164 and 183. Residues 197–208 (QADSGSNSTTEQ) are compositionally biased toward polar residues. Disordered stretches follow at residues 197 to 338 (QADS…GGRK), 418 to 443 (KEKE…SSDD), and 455 to 517 (SNNF…DDVE). Thr-227 is modified (phosphothreonine). Residues 264–276 (NEYSPGINSNWRN) show a composition bias toward polar residues. Residues 277–287 (QSQQPQQQLSP) are compositionally biased toward low complexity. Phosphoserine is present on residues Ser-286 and Ser-322. Positions 319–329 (SNSSVHSFSSQ) are enriched in polar residues. The span at 481–495 (STINNDSDSLSSPTK) shows a compositional bias: polar residues. A phosphoserine mark is found at Ser-491 and Ser-492. Basic residues predominate over residues 497-510 (GVRRRSSLKQRPTQ). A CSD2 domain is found at 582 to 657 (AWFKPTDKKV…EIDSILRDNN (76 aa)). Tyr-688 carries the post-translational modification Phosphotyrosine. The 322-residue stretch at 694 to 1015 (DTNEYNIFAI…VHRQLKAVIH (322 aa)) folds into the RNB domain. Residues 1064–1148 (GQLLTMATVL…SIKNKFRSTA (85 aa)) form the DIS3L2 C-terminal domain.

The protein belongs to the RNR ribonuclease family.

Its function is as follows. Can suppress the lethality due to deletion of SIT4, and partially the defects due to BCY1 disruption. Is implicated in the control of the cell cycle G1 phase. This Saccharomyces cerevisiae (strain ATCC 204508 / S288c) (Baker's yeast) protein is Protein SSD1 (SSD1).